The sequence spans 187 residues: Elongation factor P (187 aa).

This sequence belongs to the elongation factor P family.

It is found in the cytoplasm. It participates in protein biosynthesis; polypeptide chain elongation. Its function is as follows. Involved in peptide bond synthesis. Stimulates efficient translation and peptide-bond synthesis on native or reconstituted 70S ribosomes in vitro. Probably functions indirectly by altering the affinity of the ribosome for aminoacyl-tRNA, thus increasing their reactivity as acceptors for peptidyl transferase. The protein is Elongation factor P of Mycobacterium sp. (strain JLS).